The primary structure comprises 197 residues: Adenylate kinase (197 aa).

7 to 15 (ALPGSGKTT) serves as a coordination point for ATP.

It belongs to the archaeal adenylate kinase family.

It is found in the cytoplasm. The enzyme catalyses AMP + ATP = 2 ADP. The polypeptide is Adenylate kinase (adkA) (Pyrobaculum aerophilum (strain ATCC 51768 / DSM 7523 / JCM 9630 / CIP 104966 / NBRC 100827 / IM2)).